A 251-amino-acid chain; its full sequence is Hydroxyacylglutathione hydrolase (251 aa).

Zn(2+) contacts are provided by His53, His55, Asp57, His58, His110, Asp127, and His165.

It belongs to the metallo-beta-lactamase superfamily. Glyoxalase II family. As to quaternary structure, monomer. It depends on Zn(2+) as a cofactor.

It catalyses the reaction an S-(2-hydroxyacyl)glutathione + H2O = a 2-hydroxy carboxylate + glutathione + H(+). The protein operates within secondary metabolite metabolism; methylglyoxal degradation; (R)-lactate from methylglyoxal: step 2/2. In terms of biological role, thiolesterase that catalyzes the hydrolysis of S-D-lactoyl-glutathione to form glutathione and D-lactic acid. This chain is Hydroxyacylglutathione hydrolase, found in Erwinia tasmaniensis (strain DSM 17950 / CFBP 7177 / CIP 109463 / NCPPB 4357 / Et1/99).